Reading from the N-terminus, the 519-residue chain is GATA zinc finger domain-containing protein 8 (519 aa).

Disordered stretches follow at residues 25-182 (YSTG…SSSG), 198-249 (SNIN…SNNT), 273-359 (SNNM…NNKQ), and 431-453 (DERQ…KRRE). Low complexity predominate over residues 37-156 (TNNSQNKTNN…SSSITSPSSN (120 aa)). A compositionally biased stretch (polar residues) spans 172-182 (SPNNKQVSSSG). Residues 273–357 (SNNMNINNQH…SNINNNNNNN (85 aa)) show a composition bias toward low complexity. A coiled-coil region spans residues 429–461 (KTDERQQKKRMESDKNAEKREKRREASRLLNNV). The GATA-type zinc finger occupies 462-487 (CRNCKTTETPEWRKGPDGTKSLCNAC).

This chain is GATA zinc finger domain-containing protein 8 (gtaH), found in Dictyostelium discoideum (Social amoeba).